Here is a 282-residue protein sequence, read N- to C-terminus: Pantothenate synthetase (282 aa).

30–37 provides a ligand contact to ATP; that stretch reads MGYLHEGH. Catalysis depends on histidine 37, which acts as the Proton donor. Residue glutamine 61 participates in (R)-pantoate binding. Glutamine 61 lines the beta-alanine pocket. 147–150 is a binding site for ATP; sequence GMKD. Glutamine 153 is a (R)-pantoate binding site. ATP contacts are provided by residues valine 176 and 184–187; that span reads KSSR.

This sequence belongs to the pantothenate synthetase family. As to quaternary structure, homodimer.

The protein resides in the cytoplasm. The catalysed reaction is (R)-pantoate + beta-alanine + ATP = (R)-pantothenate + AMP + diphosphate + H(+). It functions in the pathway cofactor biosynthesis; (R)-pantothenate biosynthesis; (R)-pantothenate from (R)-pantoate and beta-alanine: step 1/1. Functionally, catalyzes the condensation of pantoate with beta-alanine in an ATP-dependent reaction via a pantoyl-adenylate intermediate. The chain is Pantothenate synthetase from Bacillus cereus (strain G9842).